The primary structure comprises 294 residues: NADH-cytochrome b5 reductase 1 (294 aa).

A helical membrane pass occupies residues 18–38; the sequence is PFIVFATVATIISAFIGYYFL. Residues 51 to 154 form the FAD-binding FR-type domain; that stretch reads DEFQKFPLIE…RGPKGFFTYT (104 aa). Residues 134–149 and 160–192 each bind FAD; these read AGKN…GPKG and SFGM…KIHL.

The protein belongs to the flavoprotein pyridine nucleotide cytochrome reductase family. As to quaternary structure, monomer. Component of the 2-(3-amino-3-carboxypropyl)histidine synthase complex composed of DPH1, DPH2, DPH3 and a NADH-dependent reductase, predominantly CBR1. FAD serves as cofactor.

The protein resides in the mitochondrion outer membrane. It carries out the reaction 2 Fe(III)-[cytochrome b5] + NADH = 2 Fe(II)-[cytochrome b5] + NAD(+) + H(+). The catalysed reaction is 2 Fe(3+)-[Dph3] + NADH = 2 Fe(2+)-[Dph3] + NAD(+) + H(+). It participates in protein modification; peptidyl-diphthamide biosynthesis. Its function is as follows. NADH-dependent reductase for DPH3 and cytochrome b5. Required for the first step of diphthamide biosynthesis, a post-translational modification of histidine which occurs in elongation factor 2. DPH1 and DPH2 transfer a 3-amino-3-carboxypropyl (ACP) group from S-adenosyl-L-methionine (SAM) to a histidine residue, the reaction is assisted by a reduction system comprising DPH3 and a NADH-dependent reductase, predominantly CBR1. By reducing DPH3, also involved in the formation of the tRNA wobble base modification mcm5s 2U (5-methoxycarbonylmethyl-2-thiouridine), mediated by the elongator complex. The cytochrome b5/NADH cytochrome b5 reductase electron transfer system supports the catalytic activity of several sterol biosynthetic enzymes. This chain is NADH-cytochrome b5 reductase 1 (CBR1), found in Candida albicans (strain SC5314 / ATCC MYA-2876) (Yeast).